The sequence spans 1320 residues: Mediator of RNA polymerase II transcription subunit 15 (1320 aa).

Residues 235–244 (QQASLNQLTP) show a composition bias toward polar residues. Disordered stretches follow at residues 235 to 283 (QQAS…KPQQ), 372 to 398 (KNMMAQQSAAALQQGQQQPRQMGPQQA), 540 to 688 (QLQQ…QQQT), 702 to 791 (QTQQ…PTEQ), and 1233 to 1270 (DSSSAEPPTEQVNKKRSHDSLEISPAESDSSLLNDSKK). Low complexity-rich tracts occupy residues 245 to 283 (QQRAQLQQRQQSTQQSQSAPPQAPQVAQSQQVPAQKPQQ), 375 to 398 (MAQQSAAALQQGQQQPRQMGPQQA), and 540 to 554 (QLQQTQEQDPQHTQL). Positions 555–587 (ADSFSQRQFTSPTLAKPSANVSTIAQQQTQPTA) are enriched in polar residues. Composition is skewed to low complexity over residues 588-624 (LSQSHPQQQQGSQAQQQLLQQQQGSQAQQQLLQQQQQ), 634-688 (QQQT…QQQT), and 702-780 (QTQQ…PQQT).

This sequence belongs to the Mediator complex subunit 15 family. Component of the Mediator complex.

Its subcellular location is the nucleus. Component of the Mediator complex, a coactivator involved in regulated gene transcription of nearly all RNA polymerase II-dependent genes. Mediator functions as a bridge to convey information from gene-specific regulatory proteins to the basal RNA polymerase II transcription machinery. Mediator is recruited to promoters by direct interactions with regulatory proteins and serves as a scaffold for the assembly of a functional preinitiation complex with RNA polymerase II and the general transcription factors. The sequence is that of Mediator of RNA polymerase II transcription subunit 15 (GAL11) from Eremothecium gossypii (strain ATCC 10895 / CBS 109.51 / FGSC 9923 / NRRL Y-1056) (Yeast).